The sequence spans 2098 residues: Unconventional myosin heavy chain 6 (2098 aa).

Positions 62-732 constitute a Myosin motor domain; it reads QGVEDMCQLG…HDLVLEQEYY (671 aa). Residue 155–162 participates in ATP binding; sequence GESGAGKT. Actin-binding stretches follow at residues 609 to 631 and 711 to 725; these read LEQL…KPNE and QLGK…KHDL. 3 consecutive IQ domains span residues 735–757, 758–787, and 804–833; these read LKDK…DFEK, QRQA…GFSR, and LRKT…RGEK. The disordered stretch occupies residues 860–898; that stretch reads FLPSDGKDSGNENDSADSSRRGSYSRLHTSPVMPPANIP. Positions 929–1168 constitute a MyTH4 1 domain; it reads HVKKPLKTAL…PSYVELQANK (240 aa). Positions 1171 to 1211 constitute a Ras-associating domain; the sequence is KPVVLAVTFMDGSVKTLCADSATTAAELCKQLAEKVGLTNS. In terms of domain architecture, FERM 1 spans 1173–1481; that stretch reads VVLAVTFMDG…MFLEGLKKRS (309 aa). In terms of domain architecture, SH3 spans 1479–1547; sequence KRSRYLVAIK…RAENVYVLPT (69 aa). The MyTH4 2 domain maps to 1624 to 1772; sequence FSREHIDQPL…PHLVEVEAIQ (149 aa). The FERM 2 domain maps to 1778–2086; it reads IFHKVFFPDN…SYISLLISNQ (309 aa).

It belongs to the TRAFAC class myosin-kinesin ATPase superfamily. Myosin family. As to quaternary structure, interacts with unc-98.

It localises to the cytoplasm. In terms of biological role, myosins are actin-based motor molecules with ATPase activity. Unconventional myosins serve in intracellular movements. Their highly divergent tails are presumed to bind to membranous compartments, which would be moved relative to actin filaments. This Caenorhabditis elegans protein is Unconventional myosin heavy chain 6.